A 185-amino-acid chain; its full sequence is Ribosome maturation factor RimM (185 aa).

One can recognise a PRC barrel domain in the interval 106–185 (TGDYYWKDLI…TIEVDWDPGF (80 aa)).

It belongs to the RimM family. In terms of assembly, binds ribosomal protein uS19.

The protein localises to the cytoplasm. Functionally, an accessory protein needed during the final step in the assembly of 30S ribosomal subunit, possibly for assembly of the head region. Essential for efficient processing of 16S rRNA. May be needed both before and after RbfA during the maturation of 16S rRNA. It has affinity for free ribosomal 30S subunits but not for 70S ribosomes. In Photorhabdus laumondii subsp. laumondii (strain DSM 15139 / CIP 105565 / TT01) (Photorhabdus luminescens subsp. laumondii), this protein is Ribosome maturation factor RimM.